A 292-amino-acid polypeptide reads, in one-letter code: Protoheme IX farnesyltransferase (292 aa).

8 helical membrane passes run 15 to 35 (YLVL…LGGM), 49 to 69 (FWTL…NMVI), 104 to 124 (VFSL…LVAL), 147 to 167 (IGGI…SGSV), 171 to 191 (AIAL…VLAL), 218 to 238 (TLLY…TGLV), 242 to 262 (YFVV…KFFF), and 271 to 291 (LFFF…VDMV).

This sequence belongs to the UbiA prenyltransferase family. Protoheme IX farnesyltransferase subfamily.

The protein localises to the cell inner membrane. It catalyses the reaction heme b + (2E,6E)-farnesyl diphosphate + H2O = Fe(II)-heme o + diphosphate. The protein operates within porphyrin-containing compound metabolism; heme O biosynthesis; heme O from protoheme: step 1/1. Its function is as follows. Converts heme B (protoheme IX) to heme O by substitution of the vinyl group on carbon 2 of heme B porphyrin ring with a hydroxyethyl farnesyl side group. The polypeptide is Protoheme IX farnesyltransferase (Aquifex aeolicus (strain VF5)).